A 396-amino-acid polypeptide reads, in one-letter code: 1-deoxy-D-xylulose 5-phosphate reductoisomerase (396 aa).

Threonine 13, glycine 14, serine 15, isoleucine 16, and asparagine 127 together coordinate NADPH. Residue lysine 128 participates in 1-deoxy-D-xylulose 5-phosphate binding. Glutamate 129 contacts NADPH. Aspartate 153 contacts Mn(2+). Positions 154, 155, 184, and 207 each coordinate 1-deoxy-D-xylulose 5-phosphate. Residue glutamate 155 participates in Mn(2+) binding. An NADPH-binding site is contributed by glycine 213. 1-deoxy-D-xylulose 5-phosphate is bound by residues serine 220, asparagine 225, lysine 226, and glutamate 229. Glutamate 229 serves as a coordination point for Mn(2+).

It belongs to the DXR family. Mg(2+) serves as cofactor. It depends on Mn(2+) as a cofactor.

The catalysed reaction is 2-C-methyl-D-erythritol 4-phosphate + NADP(+) = 1-deoxy-D-xylulose 5-phosphate + NADPH + H(+). The protein operates within isoprenoid biosynthesis; isopentenyl diphosphate biosynthesis via DXP pathway; isopentenyl diphosphate from 1-deoxy-D-xylulose 5-phosphate: step 1/6. In terms of biological role, catalyzes the NADPH-dependent rearrangement and reduction of 1-deoxy-D-xylulose-5-phosphate (DXP) to 2-C-methyl-D-erythritol 4-phosphate (MEP). The chain is 1-deoxy-D-xylulose 5-phosphate reductoisomerase from Pseudomonas putida (strain W619).